The following is a 450-amino-acid chain: NADP-specific glutamate dehydrogenase (450 aa).

Lysine 114 is an active-site residue.

Belongs to the Glu/Leu/Phe/Val dehydrogenases family. In terms of assembly, homohexamer.

It carries out the reaction L-glutamate + NADP(+) + H2O = 2-oxoglutarate + NH4(+) + NADPH + H(+). This chain is NADP-specific glutamate dehydrogenase (gdhA), found in Botryotinia fuckeliana (Noble rot fungus).